Reading from the N-terminus, the 135-residue chain is MAESIVEKCIERVSNRFKLVLLASQRTHDLNTGASNPIQAAKFKGHKNTIVSLHEIAGKQVDTHELFSLLVGRCKEYMKGNMNNVYSSNTSKLANLLNFSDNTDLDASQESQDYEVDGEIDDEINDQDGDEEVSV.

Residues 107–135 (ASQESQDYEVDGEIDDEINDQDGDEEVSV) form a disordered region. Acidic residues predominate over residues 112–135 (QDYEVDGEIDDEINDQDGDEEVSV).

It belongs to the RNA polymerase subunit omega family. In terms of assembly, the RNAP catalytic core consists of 2 alpha, 1 beta, 1 beta' and 1 omega subunit. When a sigma factor is associated with the core the holoenzyme is formed, which can initiate transcription.

It catalyses the reaction RNA(n) + a ribonucleoside 5'-triphosphate = RNA(n+1) + diphosphate. In terms of biological role, promotes RNA polymerase assembly. Latches the N- and C-terminal regions of the beta' subunit thereby facilitating its interaction with the beta and alpha subunits. The polypeptide is DNA-directed RNA polymerase subunit omega (Wolbachia pipientis wMel).